A 168-amino-acid polypeptide reads, in one-letter code: G/U mismatch-specific DNA glycosylase (168 aa).

It belongs to the uracil-DNA glycosylase (UDG) superfamily. TDG/mug family. As to quaternary structure, binds DNA as a monomer.

Its subcellular location is the cytoplasm. It carries out the reaction Specifically hydrolyzes mismatched double-stranded DNA and polynucleotides, releasing free uracil.. In terms of biological role, excises ethenocytosine and uracil, which can arise by alkylation or deamination of cytosine, respectively, from the corresponding mispairs with guanine in ds-DNA. It is capable of hydrolyzing the carbon-nitrogen bond between the sugar-phosphate backbone of the DNA and the mispaired base. The complementary strand guanine functions in substrate recognition. Required for DNA damage lesion repair in stationary-phase cells. The sequence is that of G/U mismatch-specific DNA glycosylase from Escherichia coli (strain UTI89 / UPEC).